The sequence spans 750 residues: (13E)-labda-7,13-dien-15-ol synthase (750 aa).

Residues aspartate 284, aspartate 286, aspartate 501, aspartate 505, asparagine 647, threonine 651, and glutamate 655 each coordinate Mg(2+). Residues 284 to 287 carry the DXDD motif motif; it reads DIDD. Positions 501–505 match the DDXXD motif motif; the sequence is DDLAD.

The protein belongs to the terpene synthase family. The cofactor is Mg(2+).

It catalyses the reaction geranylgeranyl diphosphate + H2O = (13E)-labda-7,13-dien-15-ol + diphosphate. It participates in secondary metabolite biosynthesis; terpenoid biosynthesis. In terms of biological role, bifunctional diterpene synthase that directly generates the endocyclic double bond, as well as the hydroxyl group: produces an endocyclic double bond isomer of copalyl diphosphate (CPP), and carries out subsequent replacement of the diphosphate by a hydroxyl group to form (13E)-labda-7,13-dien-15-ol. This Selaginella moellendorffii (Spikemoss) protein is (13E)-labda-7,13-dien-15-ol synthase.